The sequence spans 266 residues: Glutamate racemase (266 aa).

Residues 9-10 (DS) and 41-42 (YG) contribute to the substrate site. Catalysis depends on C73, which acts as the Proton donor/acceptor. 74 to 75 (NS) lines the substrate pocket. C183 (proton donor/acceptor) is an active-site residue. 184–185 (TH) provides a ligand contact to substrate.

The protein belongs to the aspartate/glutamate racemases family.

The catalysed reaction is L-glutamate = D-glutamate. The protein operates within cell wall biogenesis; peptidoglycan biosynthesis. Provides the (R)-glutamate required for cell wall biosynthesis. In Shewanella halifaxensis (strain HAW-EB4), this protein is Glutamate racemase.